A 669-amino-acid chain; its full sequence is Pre-mRNA-processing factor 39 (669 aa).

The span at 1–10 (MQNSHMDEYR) shows a compositional bias: basic and acidic residues. The tract at residues 1–23 (MQNSHMDEYRNSSNGSTGNSSEV) is disordered. A compositionally biased stretch (low complexity) spans 11-23 (NSSNGSTGNSSEV). Serine 44 carries the post-translational modification Phosphoserine. HAT repeat units lie at residues 109-141 (NHLM…LEKR), 143-175 (DNIK…FLKE), 183-218 (ETNN…WENE), 220-253 (GNLR…HVQN), 333-365 (TFEE…FEIE), 367-399 (GTHE…YMEN), and 404-436 (GVRH…QQGN). Over residues 599–624 (KEQDSLKRKAENGSEEPEEKKAHTED) the composition is skewed to basic and acidic residues. Residues 599-634 (KEQDSLKRKAENGSEEPEEKKAHTEDTTSSSTQMID) form a disordered region. The span at 625 to 634 (TTSSSTQMID) shows a compositional bias: polar residues.

It belongs to the PRP39 family.

Its subcellular location is the nucleus. Functionally, involved in pre-mRNA splicing. This is Pre-mRNA-processing factor 39 (PRPF39) from Homo sapiens (Human).